A 78-amino-acid polypeptide reads, in one-letter code: RNA-binding protein KhpA (78 aa).

A KH domain is found at 29 to 78 (TIIYELTVAKGDIGKIIGKEGRTIKAIRTLLVSVASRDNVKVSLEIMEER).

It belongs to the KhpA RNA-binding protein family.

The protein resides in the cytoplasm. A probable RNA-binding protein. The chain is RNA-binding protein KhpA from Chlamydia muridarum (strain MoPn / Nigg).